We begin with the raw amino-acid sequence, 383 residues long: MVNRINPKAIKAGGTLNLFEKYLTLWVALCIVIGIALGKLLPAVAQTLDSWSIYNVSIPIAICLFFMMYPIMVKIDFSQARQAVKAPKPVILTLVVNWVIKPFTMVIFAQFFLGYLFAPLLTATEIIRGQEVTLANSYIAGCILLGIAPCTAMVLMWGYLSYSNQGLTLVMVAVNSLAMLFLYAPLGKWLLAASNLTVPWQTIVLSVLIYVGLPLAAGIYSRYWILKHKGRQWFESQFLHYLSPIAIVALLLTLILLFAFKGELIVNNPLHIFLIAVPLFIQTNFIFLITYVLGLKLKLSYEDAAPAALIGASNHFEVAIATAVMLFGLNSGAALATVVGVLIEVPVMLMLVEICKKTAFWFPRDPEKATLLDPRCINQEIRI.

Transmembrane regions (helical) follow at residues 25–45 (LWVA…PAVA), 53–73 (IYNV…PIMV), 103–123 (FTMV…LLTA), 139–159 (IAGC…MWGY), 166–186 (GLTL…YAPL), 200–220 (WQTI…AGIY), 238–258 (FLHY…ILLF), 272–292 (IFLI…ITYV), 309–329 (LIGA…LFGL), and 332–352 (GAAL…LMLV).

The protein belongs to the arsenical resistance-3 (ACR3) (TC 2.A.59) family.

Its subcellular location is the cell membrane. This is an uncharacterized protein from Synechocystis sp. (strain ATCC 27184 / PCC 6803 / Kazusa).